The chain runs to 643 residues: Long-chain fatty acid transport protein 4 (643 aa).

2 helical membrane passes run 20–42 and 139–156; these read LPWTQVGFSLLFLYLGSGGWRFI and FVGLWLGMAKLGVEAALI. AMP is bound at residue 243 to 254; sequence YIYTSGTTGLPK.

It belongs to the ATP-dependent AMP-binding enzyme family.

It localises to the endoplasmic reticulum membrane. The enzyme catalyses a fatty acid(in) = a fatty acid(out). The catalysed reaction is (9Z,12Z)-octadecadienoate(out) = (9Z,12Z)-octadecadienoate(in). It carries out the reaction (9Z)-octadecenoate(out) = (9Z)-octadecenoate(in). It catalyses the reaction hexadecanoate(out) = hexadecanoate(in). The enzyme catalyses a long-chain fatty acid + ATP + CoA = a long-chain fatty acyl-CoA + AMP + diphosphate. The catalysed reaction is (5Z,8Z,11Z,14Z)-eicosatetraenoate + ATP + CoA = (5Z,8Z,11Z,14Z)-eicosatetraenoyl-CoA + AMP + diphosphate. It carries out the reaction (9Z)-octadecenoate + ATP + CoA = (9Z)-octadecenoyl-CoA + AMP + diphosphate. It catalyses the reaction hexadecanoate + ATP + CoA = hexadecanoyl-CoA + AMP + diphosphate. The enzyme catalyses (E)-hexadec-2-enoate + ATP + CoA = (2E)-hexadecenoyl-CoA + AMP + diphosphate. The catalysed reaction is a very long-chain fatty acid + ATP + CoA = a very long-chain fatty acyl-CoA + AMP + diphosphate. It carries out the reaction tetracosanoate + ATP + CoA = tetracosanoyl-CoA + AMP + diphosphate. Functionally, mediates the import of long-chain fatty acids (LCFA) into the cell by facilitating their transport across cell membranes. Appears to be the principal fatty acid transporter in small intestinal enterocytes. Also functions as an acyl-CoA ligase catalyzing the ATP-dependent formation of fatty acyl-CoA using LCFA and very-long-chain fatty acids (VLCFA) as substrates, which prevents fatty acid efflux from cells and might drive more fatty acid uptake. Plays a role in the formation of the epidermal barrier. Required for fat absorption in early embryogenesis. Probably involved in fatty acid transport across the blood barrier. Indirectly inhibits RPE65 via substrate competition and via production of VLCFA derivatives like lignoceroyl-CoA. Prevents light-induced degeneration of rods and cones. In Pongo abelii (Sumatran orangutan), this protein is Long-chain fatty acid transport protein 4 (SLC27A4).